Consider the following 400-residue polypeptide: Homoserine O-acetyltransferase (400 aa).

The AB hydrolase-1 domain occupies 64 to 373 (NAILICHALT…TDRGHDAFLL (310 aa)). Ser169 acts as the Nucleophile in catalysis. A substrate-binding site is contributed by Arg239. Catalysis depends on residues Asp335 and His368. Asp369 lines the substrate pocket.

Belongs to the AB hydrolase superfamily. MetX family. In terms of assembly, homodimer.

Its subcellular location is the cytoplasm. The catalysed reaction is L-homoserine + acetyl-CoA = O-acetyl-L-homoserine + CoA. It participates in amino-acid biosynthesis; L-methionine biosynthesis via de novo pathway; O-acetyl-L-homoserine from L-homoserine: step 1/1. Transfers an acetyl group from acetyl-CoA to L-homoserine, forming acetyl-L-homoserine. The polypeptide is Homoserine O-acetyltransferase (Bradyrhizobium diazoefficiens (strain JCM 10833 / BCRC 13528 / IAM 13628 / NBRC 14792 / USDA 110)).